The following is a 177-amino-acid chain: Peptidoglycan-associated lipoprotein (177 aa).

A signal peptide spans 1-32 (MSRTNISALSPMQKLARNPAVIAMTLALALAG). Cysteine 33 carries N-palmitoyl cysteine lipidation. A lipid anchor (S-diacylglycerol cysteine) is attached at cysteine 33. The region spanning 59–176 (QQDFTVNVGD…RAVTVLGGAG (118 aa)) is the OmpA-like domain.

The protein belongs to the Pal lipoprotein family. As to quaternary structure, the Tol-Pal system is composed of five core proteins: the inner membrane proteins TolA, TolQ and TolR, the periplasmic protein TolB and the outer membrane protein Pal. They form a network linking the inner and outer membranes and the peptidoglycan layer.

It is found in the cell outer membrane. Part of the Tol-Pal system, which plays a role in outer membrane invagination during cell division and is important for maintaining outer membrane integrity. In Agrobacterium fabrum (strain C58 / ATCC 33970) (Agrobacterium tumefaciens (strain C58)), this protein is Peptidoglycan-associated lipoprotein.